Consider the following 108-residue polypeptide: UPF0145 protein SYNPCC7002_A1337 (108 aa).

This sequence belongs to the UPF0145 family.

This is UPF0145 protein SYNPCC7002_A1337 from Picosynechococcus sp. (strain ATCC 27264 / PCC 7002 / PR-6) (Agmenellum quadruplicatum).